Consider the following 459-residue polypeptide: Limonoid 7-O-acetyltransferse (459 aa).

Catalysis depends on proton acceptor residues His-167 and Asp-391.

It belongs to the plant acyltransferase family. Monomer. As to expression, expressed in maturing fruits and in juice vesicles.

It catalyses the reaction (1S)-1-acetoxy-luvungin A + acetyl-CoA = (1S)-1,7-diacetoxy-luvungin A + CoA. Its pathway is secondary metabolite biosynthesis; terpenoid biosynthesis. Functionally, acetyltransferase involved in the biosynthesis of limonoids triterpene natural products such as limonin, a compound with insecticidal activity responsible for the bitter taste in citrus. Catalyzes the formation of (1S)-1,7-diacetoxy-luvungin A from (1S)-1-acetoxy-luvungin A. The polypeptide is Limonoid 7-O-acetyltransferse (Citrus sinensis (Sweet orange)).